The primary structure comprises 515 residues: MGVTVQDICFAFLQNYYERMRTDPSKLAYFYASTAELTHTNYQSKSTNEKDDVLPTVKVTGRENINKFFSRNDAKVRSLKLKLDTIDFQYTGHLHKSILIMATGEMFWTGTPVYKFCQTFILLPSSNGSTFDITNDIIRFISNSFKPYVLTDASLSQSNEENSVSAVEEDKIRHESGVEKEKEKEKSPEISKPKAKKETVKDTTAPTESSTQEKPIVDHSQPRAIPVTKESKIHTETVPSSTKGNHKQDEVSTEELGNVTKLNEKSHKAEKKAAPIKTKEGSVEAINAVNNSSLPNGKEVSDEKPVPGGVKEAETEIKPIEPQVSDAKESGNNASTPSSSPEPVANPPKMTWASKLMNENSDRISKNNTTVEYIRPETLPKKPTERKFEMGNRRDNASANSKNKKKPVFSTVNKDGFYPIYIRGTNGLREEKLRSALEKEFGKVMRITAADNFAVVDFETQKSQIDALEKKKKSIDGIEVCLERKTVKKPTSNNPPGIFTNGTRSHRKQPLKRKD.

Positions 8-140 (ICFAFLQNYY…FDITNDIIRF (133 aa)) constitute an NTF2 domain. The segment covering 157-166 (QSNEENSVSA) has biased composition (low complexity). 2 disordered regions span residues 157 to 410 (QSNE…PVFS) and 485 to 515 (KTVK…KRKD). Residues 168–201 (EEDKIRHESGVEKEKEKEKSPEISKPKAKKETVK) are compositionally biased toward basic and acidic residues. Phosphoserine is present on Ser-187. Positions 202-213 (DTTAPTESSTQE) are enriched in polar residues. Basic and acidic residues-rich tracts occupy residues 262–282 (LNEK…KEGS) and 299–319 (EVSD…EIKP). Ser-282 carries the post-translational modification Phosphoserine. Positions 330 to 341 (SGNNASTPSSSP) are enriched in polar residues. Thr-336 bears the Phosphothreonine mark. Residue Ser-340 is modified to Phosphoserine. A compositionally biased stretch (basic and acidic residues) spans 374–396 (IRPETLPKKPTERKFEMGNRRDN). Residue Ser-398 is modified to Phosphoserine. The RRM domain maps to 418 to 494 (YPIYIRGTNG…KTVKKPTSNN (77 aa)). Polar residues predominate over residues 489-503 (KPTSNNPPGIFTNGT). The segment covering 504 to 515 (RSHRKQPLKRKD) has biased composition (basic residues).

As to quaternary structure, heterotetramer with UBP3; contains two molecules of BRE5 and two molecules of UBP3. Forms a complex composed of CDC48, DOA1, deubiquitinase UBP3 and probably BRE5. Within the complex, interacts (via C-terminus) with CDC48; the interaction is direct and UBP3-independent.

In terms of biological role, has a role in de-ubiquitination. In conjunction with UBP3, cleaves ubiquitin, leading to the subsequent mono-ubiquitination of sec23. The sequence is that of UBP3-associated protein BRE5 (BRE5) from Saccharomyces cerevisiae (strain ATCC 204508 / S288c) (Baker's yeast).